The following is a 215-amino-acid chain: Adenylate kinase (215 aa).

10 to 15 (GAGKGT) is a binding site for ATP. Positions 30–59 (STGDMLRAAIKAQTPMGKMAKEFMDAGKLV) are NMP. AMP-binding positions include threonine 31, arginine 36, 57 to 59 (KLV), 85 to 88 (GFPR), and glutamine 92. Positions 122-159 (GRRVHPASGRTYHITYNPPKVDDKDNETGDDLIQREDD) are LID. ATP-binding positions include arginine 123 and 132–133 (TY). 2 residues coordinate AMP: arginine 156 and arginine 167. Glutamine 201 contacts ATP.

Belongs to the adenylate kinase family. In terms of assembly, monomer.

It is found in the cytoplasm. The enzyme catalyses AMP + ATP = 2 ADP. The protein operates within purine metabolism; AMP biosynthesis via salvage pathway; AMP from ADP: step 1/1. Its function is as follows. Catalyzes the reversible transfer of the terminal phosphate group between ATP and AMP. Plays an important role in cellular energy homeostasis and in adenine nucleotide metabolism. This Hydrogenovibrio crunogenus (strain DSM 25203 / XCL-2) (Thiomicrospira crunogena) protein is Adenylate kinase.